The primary structure comprises 712 residues: Serrate RNA effector molecule homolog (712 aa).

Disordered regions lie at residues Met1 to Tyr80, Ala214 to Ser256, and Gln620 to Pro712. 2 stretches are compositionally biased toward basic and acidic residues: residues Gly8–Arg26 and Tyr34–Asp54. Positions Arg65–Ile79 are enriched in polar residues. The span at Ala214 to Gln236 shows a compositional bias: basic and acidic residues. Positions Ala240–Asp251 are enriched in acidic residues. Composition is skewed to basic and acidic residues over residues Arg621–Gly637 and Gly645–Gly655. The span at Pro656–Gly668 shows a compositional bias: gly residues.

It belongs to the ARS2 family.

Its subcellular location is the nucleus. Its function is as follows. Acts as a mediator between the cap-binding complex (CBC) and the primary microRNAs (miRNAs) processing machinery. Contributes to the stability and delivery of capped primary miRNA transcripts to the primary miRNA processing complex, thereby playing a role in RNA-mediated gene silencing (RNAi) by miRNAs. The chain is Serrate RNA effector molecule homolog from Caenorhabditis elegans.